Consider the following 332-residue polypeptide: Oxygen-dependent coproporphyrinogen-III oxidase (332 aa).

Serine 119 contributes to the coproporphyrinogen III binding site. The active-site Proton donor is the histidine 133. Residues asparagine 135 to arginine 137 and glycine 284 to arginine 285 contribute to the coproporphyrinogen III site.

Belongs to the aerobic coproporphyrinogen-III oxidase family. In terms of assembly, homodimer.

The catalysed reaction is coproporphyrinogen III + O2 + 2 H(+) = protoporphyrinogen IX + 2 CO2 + 2 H2O. Its pathway is porphyrin-containing compound metabolism; protoporphyrin-IX biosynthesis; protoporphyrinogen-IX from coproporphyrinogen-III (O2 route): step 1/1. Involved in the heme biosynthesis. Catalyzes the aerobic oxidative decarboxylation of propionate groups of rings A and B of coproporphyrinogen-III to yield the vinyl groups in protoporphyrinogen-IX. The chain is Oxygen-dependent coproporphyrinogen-III oxidase (cpox) from Dictyostelium discoideum (Social amoeba).